The sequence spans 430 residues: Enolase (430 aa).

Gln163 serves as a coordination point for (2R)-2-phosphoglycerate. Glu205 (proton donor) is an active-site residue. 3 residues coordinate Mg(2+): Asp242, Glu287, and Asp314. Positions 339, 368, 369, and 390 each coordinate (2R)-2-phosphoglycerate. The active-site Proton acceptor is the Lys339.

Belongs to the enolase family. It depends on Mg(2+) as a cofactor.

The protein resides in the cytoplasm. It localises to the secreted. The protein localises to the cell surface. The catalysed reaction is (2R)-2-phosphoglycerate = phosphoenolpyruvate + H2O. The protein operates within carbohydrate degradation; glycolysis; pyruvate from D-glyceraldehyde 3-phosphate: step 4/5. Functionally, catalyzes the reversible conversion of 2-phosphoglycerate (2-PG) into phosphoenolpyruvate (PEP). It is essential for the degradation of carbohydrates via glycolysis. In Clostridioides difficile (strain 630) (Peptoclostridium difficile), this protein is Enolase.